The following is a 384-amino-acid chain: uncharacterized protein (384 aa).

10 consecutive transmembrane segments (helical) span residues 11 to 31 (LWFI…GISI), 33 to 53 (WMIG…AWLM), 66 to 86 (LALG…LSVL), 94 to 114 (FSVG…GYVL), 153 to 173 (LVQM…VILI), 197 to 217 (LAPV…CKAA), 224 to 244 (APWL…GAAV), 284 to 304 (IIIV…LSAV), 309 to 329 (LTGI…IAEM), and 342 to 362 (FVVA…PPFY).

The protein belongs to the AbrB family.

It is found in the cell membrane. This is an uncharacterized protein from Bacillus subtilis (strain 168).